Reading from the N-terminus, the 137-residue chain is uncharacterized protein (137 aa).

Transmembrane regions (helical) follow at residues 36–52 (LAPP…PFVL) and 113–129 (FYGY…IFCF).

It is found in the membrane. This is an uncharacterized protein from Saccharomyces cerevisiae (strain ATCC 204508 / S288c) (Baker's yeast).